The chain runs to 171 residues: Adenine phosphoribosyltransferase (171 aa).

Belongs to the purine/pyrimidine phosphoribosyltransferase family. Homodimer.

It localises to the cytoplasm. The enzyme catalyses AMP + diphosphate = 5-phospho-alpha-D-ribose 1-diphosphate + adenine. It participates in purine metabolism; AMP biosynthesis via salvage pathway; AMP from adenine: step 1/1. Functionally, catalyzes a salvage reaction resulting in the formation of AMP, that is energically less costly than de novo synthesis. The polypeptide is Adenine phosphoribosyltransferase (Geobacter metallireducens (strain ATCC 53774 / DSM 7210 / GS-15)).